The following is a 307-amino-acid chain: Small ribosomal subunit protein uS2 (307 aa).

The disordered stretch occupies residues 256-307; sequence GGEAEQAAVDATGGAATEETPAAESTGAASEAAAVSEAAEPATEQPAADAEA. Positions 259 to 307 are enriched in low complexity; the sequence is AEQAAVDATGGAATEETPAAESTGAASEAAAVSEAAEPATEQPAADAEA.

The protein belongs to the universal ribosomal protein uS2 family.

The protein is Small ribosomal subunit protein uS2 of Nocardioides sp. (strain ATCC BAA-499 / JS614).